The following is a 470-amino-acid chain: MATFMTEDFLLKNDIARTLYHKYAAPMPIYDFHCHLSPQEIADDRRFDNLGQIWLEGDHYKWRALRSAGVDESLITGKETSDYEKYMAWANTVPKTLGNPLYHWTHLELRRPFGITGTLFGPDTAESIWTQCNEKLATPAFSARGIMQQMNVRMVGTTDDPIDSLEYHRQIAADDSIDIEVAPSWRPDKVFKIELDGFVDYLGKLEAAADVSITRFDDLRQALTRRLDHFAACGCRASDHGIETLRFAPVPDDAQLDAILGKRLAGETLSELEIAQFTTAVLVWLGRQYAARGWVMQLHIGAIRNNNTRMFRLLGPDTGFDSIGDNNISWALSRLLDSMDVTNELPKTILYCLNPRDNEVLATMIGNFQGPGIAGKVQFGSGWWFNDQKDGMLRQLEQLSQMGLLSQFVGMLTDSRSFLSYTRHEYFRRILCNLLGQWAQDGEIPDDEAMLSRMVQDICFNNAQRYFTIK.

Belongs to the metallo-dependent hydrolases superfamily. Uronate isomerase family.

It catalyses the reaction D-glucuronate = D-fructuronate. The enzyme catalyses aldehydo-D-galacturonate = keto-D-tagaturonate. It participates in carbohydrate metabolism; pentose and glucuronate interconversion. In Salmonella newport (strain SL254), this protein is Uronate isomerase.